We begin with the raw amino-acid sequence, 256 residues long: 3-hydroxy-5-phosphonooxypentane-2,4-dione thiolase (256 aa).

Lys-168 functions as the Schiff-base intermediate with substrate in the catalytic mechanism.

This sequence belongs to the DeoC/FbaB aldolase family. As to quaternary structure, homodecamer.

It is found in the cytoplasm. The enzyme catalyses dihydroxyacetone phosphate + acetyl-CoA = 3-hydroxy-2,4-dioxopentyl phosphate + CoA. Its function is as follows. Involved in the degradation of phospho-AI-2, thereby terminating induction of the lsr operon and closing the AI-2 signaling cycle. Catalyzes the transfer of an acetyl moiety from 3-hydroxy-5-phosphonooxypentane-2,4-dione to CoA to form glycerone phosphate and acetyl-CoA. The chain is 3-hydroxy-5-phosphonooxypentane-2,4-dione thiolase (lsrF) from Shigella flexneri serotype 5b (strain 8401).